The primary structure comprises 259 residues: 3-deoxy-manno-octulosonate cytidylyltransferase (259 aa).

The protein belongs to the KdsB family.

It localises to the cytoplasm. It catalyses the reaction 3-deoxy-alpha-D-manno-oct-2-ulosonate + CTP = CMP-3-deoxy-beta-D-manno-octulosonate + diphosphate. It functions in the pathway nucleotide-sugar biosynthesis; CMP-3-deoxy-D-manno-octulosonate biosynthesis; CMP-3-deoxy-D-manno-octulosonate from 3-deoxy-D-manno-octulosonate and CTP: step 1/1. It participates in bacterial outer membrane biogenesis; lipopolysaccharide biosynthesis. Its function is as follows. Activates KDO (a required 8-carbon sugar) for incorporation into bacterial lipopolysaccharide in Gram-negative bacteria. This chain is 3-deoxy-manno-octulosonate cytidylyltransferase, found in Nitrosococcus oceani (strain ATCC 19707 / BCRC 17464 / JCM 30415 / NCIMB 11848 / C-107).